The chain runs to 208 residues: Peptidyl-tRNA hydrolase (208 aa).

TRNA is bound at residue tyrosine 19. The active-site Proton acceptor is histidine 24. 3 residues coordinate tRNA: phenylalanine 71, asparagine 73, and asparagine 119.

This sequence belongs to the PTH family. As to quaternary structure, monomer.

The protein resides in the cytoplasm. The enzyme catalyses an N-acyl-L-alpha-aminoacyl-tRNA + H2O = an N-acyl-L-amino acid + a tRNA + H(+). Functionally, hydrolyzes ribosome-free peptidyl-tRNAs (with 1 or more amino acids incorporated), which drop off the ribosome during protein synthesis, or as a result of ribosome stalling. In terms of biological role, catalyzes the release of premature peptidyl moieties from peptidyl-tRNA molecules trapped in stalled 50S ribosomal subunits, and thus maintains levels of free tRNAs and 50S ribosomes. The chain is Peptidyl-tRNA hydrolase from Synechococcus elongatus (strain ATCC 33912 / PCC 7942 / FACHB-805) (Anacystis nidulans R2).